The following is a 209-amino-acid chain: Large ribosomal subunit protein uL3 (209 aa).

The interval 118-150 is disordered; sequence GFQGAIKRHGQSRGPMTHGSRYHRRPGSMGPVD.

Belongs to the universal ribosomal protein uL3 family. As to quaternary structure, part of the 50S ribosomal subunit. Forms a cluster with proteins L14 and L19.

Its function is as follows. One of the primary rRNA binding proteins, it binds directly near the 3'-end of the 23S rRNA, where it nucleates assembly of the 50S subunit. The protein is Large ribosomal subunit protein uL3 of Bacillus pumilus (strain SAFR-032).